The chain runs to 263 residues: Norsolorinic acid ketoreductase stcE (263 aa).

7 residues coordinate NADP(+): leucine 29, aspartate 76, asparagine 105, tyrosine 177, lysine 181, isoleucine 208, and serine 210. The Proton donor role is filled by tyrosine 177. Catalysis depends on lysine 181, which acts as the Lowers pKa of active site Tyr.

The protein belongs to the short-chain dehydrogenases/reductases (SDR) family.

It catalyses the reaction (1'S)-averantin + NADP(+) = norsolorinic acid + NADPH + H(+). It functions in the pathway mycotoxin biosynthesis; sterigmatocystin biosynthesis. Its function is as follows. Short chain dehydrogenase; part of the gene cluster that mediates the biosynthesis of sterigmatocystin (ST), a polyketide-derived furanocoumarin which is part of the most toxic and carcinogenic compounds among the known mycotoxins. The first step in the biosynthesis of sterigmatocystin is the production of hexanoate by the fatty acid synthase (FAS) units stcJ and stcK. The polyketide backbone is assembled by the non-reducing polyketide synthase stcA by condensation of the starter hexanoyl-CoA and 7 malonyl-CoA extender units followed by cyclization and release of norsolorinic acid. Norsolorinic acid is the first stable intermediate in the biosynthesis of sterigmatocystin and is converted into averantin (AVN) by the ketoreductase stcE which reduces the hexanoate ketone to an alcohol. Averantin is then oxidized into 5'-hydroxyaverantin (HAVN) by the cytochrome P450 monooxygenase stcF. 5'-hydroxyaverantin is further converted to 5'-oxyaverantin (OAVN) by the 5'-hydroxyaverantin dehydrogenase stcG. The next step is the conversion of OAVN into averufin (AVF) which is catalyzed by a yet to be identified enzyme. The cytochrome P450 monooxygenase stcB and the flavin-binding monooxygenase stcW are both required for the conversion of averufin to 1-hydroxyversicolorone. The esterase stcI probably catalyzes the formation of versiconal hemiacetal acetate from 1-hydroxyversicolorone. The oxydoreductase stcN then probably catalyzes the biosynthetic step from versiconal to versicolorin B (VERB). The next step is performed by the versicolorin B desaturase stcL to produce versicolorin A (VERA). The ketoreductase stcU and the cytochrome P450 monooxygenase stcS are involved in the conversion of versicolorin A to demethylsterigmatocystin. The Baeyer-Villiger oxidas stcQ and the reductase stcR might be involved in the biosynthetic step from versicolorin A to demethylsterigmatocystin. The final step in the biosynthesis of sterigmatocystin is the methylation of demethylsterigmatocystin catalyzed by the methyltransferase stcP. The polypeptide is Norsolorinic acid ketoreductase stcE (Emericella nidulans (strain FGSC A4 / ATCC 38163 / CBS 112.46 / NRRL 194 / M139) (Aspergillus nidulans)).